Consider the following 478-residue polypeptide: Trigger factor (478 aa).

A compositionally biased stretch (basic and acidic residues) spans 154 to 167 (MAKDSRSFEPREEG). Disordered stretches follow at residues 154–173 (MAKD…AQSG) and 444–478 (LFAE…KAAG). The 86-residue stretch at 173 to 258 (GDRVTIDFVG…VKAVAAPGET (86 aa)) folds into the PPIase FKBP-type domain.

Belongs to the FKBP-type PPIase family. Tig subfamily.

The protein localises to the cytoplasm. It carries out the reaction [protein]-peptidylproline (omega=180) = [protein]-peptidylproline (omega=0). Involved in protein export. Acts as a chaperone by maintaining the newly synthesized protein in an open conformation. Functions as a peptidyl-prolyl cis-trans isomerase. This is Trigger factor from Methylorubrum populi (strain ATCC BAA-705 / NCIMB 13946 / BJ001) (Methylobacterium populi).